Reading from the N-terminus, the 347-residue chain is MRIEEDLKLGFKDVLIRPKRSTLKSRSDVELERQFTFKHSGQSWSGVPIIAANMDTVGTFSMASALASFDILTAVHKHYSVEEWQAFINNSSADVLKHVMVSTGTSDADFEKTKQILDLNSALNFVCIDVANGYSEHFVQFVAKAREAWPTKTICAGNVVTGEMCEELILSGADIVKVGIGPGSVCTTRVKTGVGYPQLSAVIECADAAHGLGGMIVSDGGCTTPGDVAKAFGGGADFVMLGGMLAGHEESGGRIVEENGEKFMLFYGMSSESAMKRHVGGVAEYRAAEGKTVKLPLRGPVENTARDILGGLRSACTYVGASRLKELTKRTTFIRVQEQENRIFNNL.

108-131 is a binding site for NADP(+); the sequence is ADFEKTKQILDLNSALNFVCIDVA. 2 residues coordinate K(+): Gly181 and Gly183. Cys186 serves as the catalytic Thioimidate intermediate. Residue 216 to 239 participates in NADP(+) binding; sequence IVSDGGCTTPGDVAKAFGGGADFV.

Belongs to the IMPDH/GMPR family. GuaC type 1 subfamily. As to quaternary structure, homotetramer.

It carries out the reaction IMP + NH4(+) + NADP(+) = GMP + NADPH + 2 H(+). In terms of biological role, catalyzes the irreversible NADPH-dependent deamination of GMP to IMP. It functions in the conversion of nucleobase, nucleoside and nucleotide derivatives of G to A nucleotides, and in maintaining the intracellular balance of A and G nucleotides. This is GMP reductase from Escherichia coli O81 (strain ED1a).